Consider the following 351-residue polypeptide: MVKALVIINCIILAIGNCGGPLIMRLYFNNGGKRIWFSTFLETAGFPVIFIPLLFSYITRRRSNNVGDSTSFFLIKPRLLIAAVIVGILSGFDNYLYAYGIAYLPVSTAALIIASQLAFIAIFSFFMVKHKFTPFTINAVVLLTVGAAVLGMHTETDKPVHETHKQYITGFLITVAAAVMYAFILPLVELAYQKAKQTMSYTLVLEFQLILCLLASIVSVIGMFIAGDFKALPKEAREFKLGEALFYVVAVFSAIIWQGFFLGAIGLIFSTSSLVSGIMISVLLPITEVLAVIFYHEKFQAEKGLSLALSLWGFVSYFYGEIKSGEDKRRIQQEESQETEQSSLSRPISEC.

Transmembrane regions (helical) follow at residues 4-24 (ALVIINCIILAIGNCGGPLIM), 35-55 (IWFSTFLETAGFPVIFIPLLF), 72-92 (FFLIKPRLLIAAVIVGILSGF), 108-128 (TAALIIASQLAFIAIFSFFMV), 132-152 (FTPFTINAVVLLTVGAAVLGM), 168-188 (ITGFLITVAAAVMYAFILPLV), 207-227 (FQLILCLLASIVSVIGMFIAG), 249-269 (VAVFSAIIWQGFFLGAIGLIF), 274-294 (LVSGIMISVLLPITEVLAVIF), and 304-324 (GLSLALSLWGFVSYFYGEIKS). Residues 45–152 (GFPVIFIPLL…LTVGAAVLGM (108 aa)) enclose the EamA domain. Residues 329–351 (RRIQQEESQETEQSSLSRPISEC) form a disordered region.

Belongs to the purine permeases (TC 2.A.7.14) family. As to expression, restricted to pollen.

The protein localises to the membrane. Its function is as follows. May be involved in transport of purine derivatives during pollen germination and tube elongation. This Arabidopsis thaliana (Mouse-ear cress) protein is Purine permease 3 (PUP3).